A 117-amino-acid chain; its full sequence is Large ribosomal subunit protein uL18 (117 aa).

Belongs to the universal ribosomal protein uL18 family. As to quaternary structure, part of the 50S ribosomal subunit; part of the 5S rRNA/L5/L18/L25 subcomplex. Contacts the 5S and 23S rRNAs.

This is one of the proteins that bind and probably mediate the attachment of the 5S RNA into the large ribosomal subunit, where it forms part of the central protuberance. This Tolumonas auensis (strain DSM 9187 / NBRC 110442 / TA 4) protein is Large ribosomal subunit protein uL18.